Consider the following 1403-residue polypeptide: Sushi, nidogen and EGF-like domain-containing protein 1 (1403 aa).

The first 24 residues, 1-24 (MRRGAAWALLLAAALGLGARGVRA), serve as a signal peptide directing secretion. The region spanning 103-258 (AFWADVDNRR…GRWAFRIDDA (156 aa)) is the NIDO domain. EGF-like domains follow at residues 268 to 309 (TTSV…RRCH), 311 to 347 (DVNE…PTCE), and 349 to 385 (AQSP…ATCE). 18 cysteine pairs are disulfide-bonded: cysteine 272/cysteine 284, cysteine 278/cysteine 297, cysteine 299/cysteine 308, cysteine 315/cysteine 326, cysteine 320/cysteine 335, cysteine 337/cysteine 346, cysteine 353/cysteine 364, cysteine 358/cysteine 373, cysteine 375/cysteine 384, cysteine 391/cysteine 402, cysteine 396/cysteine 411, cysteine 413/cysteine 422, cysteine 433/cysteine 444, cysteine 438/cysteine 453, cysteine 455/cysteine 464, cysteine 472/cysteine 480, cysteine 474/cysteine 488, and cysteine 490/cysteine 499. N-linked (GlcNAc...) asparagine glycosylation occurs at asparagine 292. One can recognise an EGF-like 4; calcium-binding domain in the interval 387–423 (DVDECSSDPCLNGGSCVDLVGNYSCICVEPFEGPQCE). Asparagine 408 is a glycosylation site (N-linked (GlcNAc...) asparagine). EGF-like domains follow at residues 429–465 (VPSP…LDCR) and 468–500 (ILND…LLCE). N-linked (GlcNAc...) asparagine glycosylation is present at asparagine 484. Residue asparagine 536 is glycosylated (N-linked (GlcNAc...) asparagine). EGF-like domains follow at residues 541–577 (LPSP…RHCE), 580–616 (RPHL…RHCE), 619–655 (KPDS…RHCE), and 657–693 (APSP…HRCQ). Intrachain disulfides connect cysteine 545–cysteine 556, cysteine 550–cysteine 565, cysteine 567–cysteine 576, cysteine 584–cysteine 595, cysteine 589–cysteine 604, cysteine 606–cysteine 615, cysteine 623–cysteine 634, cysteine 628–cysteine 643, cysteine 645–cysteine 654, cysteine 661–cysteine 672, cysteine 666–cysteine 681, cysteine 683–cysteine 692, cysteine 698–cysteine 739, cysteine 724–cysteine 751, cysteine 757–cysteine 768, cysteine 762–cysteine 777, cysteine 779–cysteine 788, cysteine 795–cysteine 806, cysteine 800–cysteine 815, cysteine 817–cysteine 826, cysteine 833–cysteine 844, cysteine 838–cysteine 853, cysteine 855–cysteine 864, cysteine 871–cysteine 882, cysteine 876–cysteine 891, and cysteine 893–cysteine 902. One can recognise a Sushi domain in the interval 696–753 (VDCGQPEEVKHATMRLNGTRMGSVALYTCDPGFSLSVLSHMRVCQPQGVWSQPPQCIE). Asparagine 712 is a glycosylation site (N-linked (GlcNAc...) asparagine). The 37-residue stretch at 753–789 (EVDECQSQPCLHKGSCQDLIAGYQCLCSPGYEGVHCE) folds into the EGF-like 11; calcium-binding domain. An EGF-like 12; calcium-binding domain is found at 791–827 (ETDECQAQPCRNGGSCRDLPGAFICQCPEGFVGTHCE). EGF-like domains follow at residues 829-865 (EVDA…YNCE) and 867-903 (VSDP…KDCT). A glycan (N-linked (GlcNAc...) asparagine) is linked at asparagine 886. Fibronectin type-III domains are found at residues 908–1006 (PPTA…TRPR), 1007–1105 (PIED…TRPL), and 1106–1200 (PPAN…SPRD). N-linked (GlcNAc...) asparagine glycans are attached at residues asparagine 977, asparagine 1015, asparagine 1109, asparagine 1139, and asparagine 1298. Positions 1295–1314 (LPKNNSKDTESTPGSCSEDT) are disordered. Over residues 1305–1314 (STPGSCSEDT) the composition is skewed to polar residues. Residues 1306 to 1342 (TPGSCSEDTCQNGGTCVPGANAHSCDCRPGFKGRHCE) form the EGF-like 15 domain. 3 cysteine pairs are disulfide-bonded: cysteine 1310-cysteine 1321, cysteine 1315-cysteine 1330, and cysteine 1332-cysteine 1341.

In terms of processing, phosphorylated on serine and threonine residues. N-glycosylated. In terms of tissue distribution, expressed in liver.

Its subcellular location is the secreted. It is found in the extracellular space. The protein resides in the extracellular matrix. The polypeptide is Sushi, nidogen and EGF-like domain-containing protein 1 (Rattus norvegicus (Rat)).